Reading from the N-terminus, the 219-residue chain is Ribose-5-phosphate isomerase A (219 aa).

Substrate contacts are provided by residues 28–31 (TGST), 81–84 (DGAD), and 94–97 (KGGG). The active-site Proton acceptor is glutamate 103. Residue lysine 121 participates in substrate binding.

This sequence belongs to the ribose 5-phosphate isomerase family. Homodimer.

The catalysed reaction is aldehydo-D-ribose 5-phosphate = D-ribulose 5-phosphate. The protein operates within carbohydrate degradation; pentose phosphate pathway; D-ribose 5-phosphate from D-ribulose 5-phosphate (non-oxidative stage): step 1/1. In terms of biological role, catalyzes the reversible conversion of ribose-5-phosphate to ribulose 5-phosphate. The chain is Ribose-5-phosphate isomerase A from Photobacterium profundum (strain SS9).